Consider the following 197-residue polypeptide: LexA repressor (197 aa).

The H-T-H motif DNA-binding region spans 28 to 47; sequence VREIARRFRITPRGAQLHLV. Residues serine 119 and lysine 156 each act as for autocatalytic cleavage activity in the active site.

This sequence belongs to the peptidase S24 family. Homodimer.

The catalysed reaction is Hydrolysis of Ala-|-Gly bond in repressor LexA.. Represses a number of genes involved in the response to DNA damage (SOS response), including recA and lexA. In the presence of single-stranded DNA, RecA interacts with LexA causing an autocatalytic cleavage which disrupts the DNA-binding part of LexA, leading to derepression of the SOS regulon and eventually DNA repair. This Thermotoga neapolitana protein is LexA repressor.